A 198-amino-acid polypeptide reads, in one-letter code: Protoplast secreted protein 2 (198 aa).

Positions 1–21 (MPRVAIIIYTLYGHVAATAEA) are cleaved as a signal peptide. A Flavodoxin-like domain is found at 22–191 (EKKGIEAAGG…QVHEIQGKTF (170 aa)).

This sequence belongs to the WrbA family.

It localises to the secreted. The sequence is that of Protoplast secreted protein 2 (PST2) from Saccharomyces cerevisiae (strain ATCC 204508 / S288c) (Baker's yeast).